We begin with the raw amino-acid sequence, 153 residues long: Large ribosomal subunit protein uL13 (153 aa).

It belongs to the universal ribosomal protein uL13 family. Part of the 50S ribosomal subunit.

In terms of biological role, this protein is one of the early assembly proteins of the 50S ribosomal subunit, although it is not seen to bind rRNA by itself. It is important during the early stages of 50S assembly. The polypeptide is Large ribosomal subunit protein uL13 (Xanthobacter autotrophicus (strain ATCC BAA-1158 / Py2)).